The following is a 230-amino-acid chain: Small ribosomal subunit protein uS3 (230 aa).

The 69-residue stretch at 39–107 (VRNYLRQKLA…PIHVNIEEIR (69 aa)) folds into the KH type-2 domain. Residues 210–230 (SSKPEHESKQRKAGRRNAAAN) are disordered.

It belongs to the universal ribosomal protein uS3 family. Part of the 30S ribosomal subunit. Forms a tight complex with proteins S10 and S14.

Binds the lower part of the 30S subunit head. Binds mRNA in the 70S ribosome, positioning it for translation. The chain is Small ribosomal subunit protein uS3 from Neisseria gonorrhoeae (strain ATCC 700825 / FA 1090).